The following is a 321-amino-acid chain: Acyl-CoA 5-desaturase AL21 (321 aa).

The next 2 membrane-spanning stretches (helical) occupy residues I42–F62 and W64–L84. Residues H87, H92, H124, H127, and H128 each contribute to the Fe cation site. The Histidine box-1 signature appears at H87–H92. Positions H124 to H128 match the Histidine box-2 motif. A helical transmembrane segment spans residues L190–V210. Residues H227, H256, H259, and H260 each contribute to the Fe cation site. Positions H256–H260 match the Histidine box-3 motif.

The protein belongs to the fatty acid desaturase type 1 family. It depends on Fe(2+) as a cofactor.

The protein localises to the membrane. It carries out the reaction (11Z,14Z)-eicosadienoyl-CoA + AH2 + O2 = (5Z,11Z,14Z)-eicosatrienoyl-CoA + A + 2 H2O. The catalysed reaction is (11Z,14Z,17Z)-eicosatrienoyl-CoA + AH2 + O2 = (5Z,11Z,14Z,17Z)-eicosatetraenoyl-CoA + A + 2 H2O. The protein operates within lipid metabolism; polyunsaturated fatty acid biosynthesis. Catalyzes the desaturation of 20:2Delta(11,14) and 20:3Delta(11,14,17) to generate sciadonic acid (20:3Delta(5,11,14)) and juniperonic acid (20:4Delta(5,11,14,17)). The enzyme can also use 16:0 and 18:0 as substrates. In Anemone leveillei (Windflower), this protein is Acyl-CoA 5-desaturase AL21.